Consider the following 183-residue polypeptide: MKKKTTLSEEDQALFRQLMAGTRKIKQDTIVHRPQSKKISEVPVKRLIQEQADASHYFSDEFQPLLNTEGPVKYVRPDVSHFEAKKLRRGDYSPELFLDLHGLTQLQAKQELGALIAACRREHVFCACVMHGHGKHILKQQTPLWLAQHPHVMAFHQAPKEYGGDAALLVLIEVEEWLPPELP.

Residues 98–173 (LDLHGLTQLQ…GDAALLVLIE (76 aa)) enclose the Smr domain.

This sequence belongs to the SmrB family. Associates with collided ribosomes, but not with correctly translating polysomes.

Acts as a ribosome collision sensor. Detects stalled/collided disomes (pairs of ribosomes where the leading ribosome is stalled and a second ribosome has collided with it) and endonucleolytically cleaves mRNA at the 5' boundary of the stalled ribosome. Stalled/collided disomes form a new interface (primarily via the 30S subunits) that binds SmrB. Cleaved mRNA becomes available for tmRNA ligation, leading to ribosomal subunit dissociation and rescue of stalled ribosomes. In Shigella dysenteriae serotype 1 (strain Sd197), this protein is Ribosome rescue factor SmrB.